Here is a 947-residue protein sequence, read N- to C-terminus: Bifunctional glutamine synthetase adenylyltransferase/adenylyl-removing enzyme (947 aa).

The adenylyl removase stretch occupies residues 1 to 440 (MTPLSSPLSQ…VFNELIGDDE (440 aa)). The tract at residues 450-947 (SEPWRDVWQD…ASWRKWLVAV (498 aa)) is adenylyl transferase.

It belongs to the GlnE family. The cofactor is Mg(2+).

The enzyme catalyses [glutamine synthetase]-O(4)-(5'-adenylyl)-L-tyrosine + phosphate = [glutamine synthetase]-L-tyrosine + ADP. It carries out the reaction [glutamine synthetase]-L-tyrosine + ATP = [glutamine synthetase]-O(4)-(5'-adenylyl)-L-tyrosine + diphosphate. Its function is as follows. Involved in the regulation of glutamine synthetase GlnA, a key enzyme in the process to assimilate ammonia. When cellular nitrogen levels are high, the C-terminal adenylyl transferase (AT) inactivates GlnA by covalent transfer of an adenylyl group from ATP to specific tyrosine residue of GlnA, thus reducing its activity. Conversely, when nitrogen levels are low, the N-terminal adenylyl removase (AR) activates GlnA by removing the adenylyl group by phosphorolysis, increasing its activity. The regulatory region of GlnE binds the signal transduction protein PII (GlnB) which indicates the nitrogen status of the cell. In Salmonella dublin (strain CT_02021853), this protein is Bifunctional glutamine synthetase adenylyltransferase/adenylyl-removing enzyme.